A 710-amino-acid chain; its full sequence is Solute carrier organic anion transporter family member 3A1 (710 aa).

M1 bears the N-acetylmethionine mark. Positions M1–S15 are enriched in gly residues. The tract at residues M1–R25 is disordered. Residues M1 to K40 are Cytoplasmic-facing. Residues I41–L60 traverse the membrane as a helical segment. Topologically, residues V61–G79 are extracellular. The helical transmembrane segment at V80–G100 threads the bilayer. Over A101 to P106 the chain is Cytoplasmic. The helical transmembrane segment at R107 to H131 threads the bilayer. Topologically, residues Q132 to N174 are extracellular. N-linked (GlcNAc...) asparagine glycosylation is found at N153 and N169. The helical transmembrane segment at M175 to D203 threads the bilayer. At D204–L222 the chain is on the cytoplasmic side. A helical transmembrane segment spans residues V223 to A243. Residues V244–I261 lie on the Extracellular side of the membrane. A helical transmembrane segment spans residues G262–P286. Over Q287–H344 the chain is Cytoplasmic. A helical transmembrane segment spans residues L345–A366. Residues G367–S386 lie on the Extracellular side of the membrane. N381 is a glycosylation site (N-linked (GlcNAc...) asparagine). Residues A387 to V410 form a helical membrane-spanning segment. Residues K411 to S414 are Cytoplasmic-facing. The chain crosses the membrane as a helical span at residues L415–F438. Residues L439–F539 lie on the Extracellular side of the membrane. An N-linked (GlcNAc...) asparagine glycan is attached at N457. A Kazal-like domain is found at L465 to T513. 3 disulfide bridges follow: C471–C497, C475–C486, and C477–C501. N-linked (GlcNAc...) asparagine glycans are attached at residues N502, N505, and N519. The helical transmembrane segment at L540–I562 threads the bilayer. The Cytoplasmic portion of the chain corresponds to R563–S571. Residues Y572–I597 traverse the membrane as a helical segment. Residues D598–A630 lie on the Extracellular side of the membrane. Residues I631 to L648 traverse the membrane as a helical segment. The Cytoplasmic segment spans residues R649–N705.

Belongs to the organo anion transporter (TC 2.A.60) family. In terms of tissue distribution, widely expressed.

It is found in the basolateral cell membrane. The protein localises to the apical cell membrane. The protein resides in the basal cell membrane. It catalyses the reaction L-thyroxine(out) = L-thyroxine(in). It carries out the reaction prostaglandin E1(out) = prostaglandin E1(in). The catalysed reaction is prostaglandin E2(out) = prostaglandin E2(in). The enzyme catalyses prostaglandin F2alpha(out) = prostaglandin F2alpha(in). It catalyses the reaction (5Z,8Z,11Z,14Z)-eicosatetraenoate(out) = (5Z,8Z,11Z,14Z)-eicosatetraenoate(in). It carries out the reaction taurocholate(out) = taurocholate(in). The catalysed reaction is glycocholate(out) = glycocholate(in). The enzyme catalyses estrone 3-sulfate(out) = estrone 3-sulfate(in). It catalyses the reaction argipressin(out) = argipressin(in). Its function is as follows. Putative organic anion antiporter with apparent broad substrate specificity. Recognizes various substrates including thyroid hormone L-thyroxine, prostanoids such as prostaglandin E1 and E2, bile acids such as taurocholate, glycolate and glycochenodeoxycholate and peptide hormones such as L-arginine vasopressin, likely operating in a tissue-specific manner. The transport mechanism, its electrogenicity and potential tissue-specific counterions remain to be elucidated. This Mus musculus (Mouse) protein is Solute carrier organic anion transporter family member 3A1 (Slco3a1).